Here is a 289-residue protein sequence, read N- to C-terminus: Protease HtpX homolog (289 aa).

Helical transmembrane passes span 9 to 29 and 31 to 51; these read TGVL…LIGG and GGMI…YWFS. Zn(2+) is bound at residue His-133. The active site involves Glu-134. His-137 contributes to the Zn(2+) binding site. The next 2 membrane-spanning stretches (helical) occupy residues 143–163 and 182–202; these read TLIQ…VDFA and IGLI…QLAI. Glu-207 lines the Zn(2+) pocket.

This sequence belongs to the peptidase M48B family. Zn(2+) is required as a cofactor.

It localises to the cell membrane. This is Protease HtpX homolog from Pyrococcus abyssi (strain GE5 / Orsay).